A 350-amino-acid chain; its full sequence is Deoxyhypusine synthase-like protein (350 aa).

The protein belongs to the deoxyhypusine synthase family.

This is Deoxyhypusine synthase-like protein from Chlorobaculum parvum (strain DSM 263 / NCIMB 8327) (Chlorobium vibrioforme subsp. thiosulfatophilum).